We begin with the raw amino-acid sequence, 314 residues long: Ribosomal protein L11 methyltransferase (314 aa).

S-adenosyl-L-methionine-binding residues include threonine 152, glycine 184, aspartate 206, and asparagine 248.

Belongs to the methyltransferase superfamily. PrmA family.

The protein resides in the cytoplasm. The catalysed reaction is L-lysyl-[protein] + 3 S-adenosyl-L-methionine = N(6),N(6),N(6)-trimethyl-L-lysyl-[protein] + 3 S-adenosyl-L-homocysteine + 3 H(+). Methylates ribosomal protein L11. This chain is Ribosomal protein L11 methyltransferase, found in Geotalea daltonii (strain DSM 22248 / JCM 15807 / FRC-32) (Geobacter daltonii).